The following is a 244-amino-acid chain: 1-(5-phosphoribosyl)-5-[(5-phosphoribosylamino)methylideneamino] imidazole-4-carboxamide isomerase (244 aa).

The active-site Proton acceptor is the Asp10. The Proton donor role is filled by Asp132.

The protein belongs to the HisA/HisF family.

The protein resides in the cytoplasm. It carries out the reaction 1-(5-phospho-beta-D-ribosyl)-5-[(5-phospho-beta-D-ribosylamino)methylideneamino]imidazole-4-carboxamide = 5-[(5-phospho-1-deoxy-D-ribulos-1-ylimino)methylamino]-1-(5-phospho-beta-D-ribosyl)imidazole-4-carboxamide. The protein operates within amino-acid biosynthesis; L-histidine biosynthesis; L-histidine from 5-phospho-alpha-D-ribose 1-diphosphate: step 4/9. This Stenotrophomonas maltophilia (strain K279a) protein is 1-(5-phosphoribosyl)-5-[(5-phosphoribosylamino)methylideneamino] imidazole-4-carboxamide isomerase.